Reading from the N-terminus, the 370-residue chain is Chaperone protein DnaJ (370 aa).

Residues 6–70 (DFYEILGVSK…QKRANYDQFG (65 aa)) form the J domain. The segment at 134-216 (GANKSVTLNV…CHGKGFNTKR (83 aa)) adopts a CR-type zinc-finger fold. Zn(2+)-binding residues include cysteine 147, cysteine 150, cysteine 164, cysteine 167, cysteine 190, cysteine 193, cysteine 204, and cysteine 207. CXXCXGXG motif repeat units lie at residues 147–154 (CTSCHGSG), 164–171 (CSRCGGTG), 190–197 (CPDCGGSG), and 204–211 (CGECHGKG).

The protein belongs to the DnaJ family. As to quaternary structure, homodimer. It depends on Zn(2+) as a cofactor.

The protein localises to the cytoplasm. Its function is as follows. Participates actively in the response to hyperosmotic and heat shock by preventing the aggregation of stress-denatured proteins and by disaggregating proteins, also in an autonomous, DnaK-independent fashion. Unfolded proteins bind initially to DnaJ; upon interaction with the DnaJ-bound protein, DnaK hydrolyzes its bound ATP, resulting in the formation of a stable complex. GrpE releases ADP from DnaK; ATP binding to DnaK triggers the release of the substrate protein, thus completing the reaction cycle. Several rounds of ATP-dependent interactions between DnaJ, DnaK and GrpE are required for fully efficient folding. Also involved, together with DnaK and GrpE, in the DNA replication of plasmids through activation of initiation proteins. This is Chaperone protein DnaJ from Erysipelothrix rhusiopathiae.